The chain runs to 39 residues: Photosystem II reaction center protein J (39 aa).

Residues I7 to F27 traverse the membrane as a helical segment.

The protein belongs to the PsbJ family. In terms of assembly, PSII is composed of 1 copy each of membrane proteins PsbA, PsbB, PsbC, PsbD, PsbE, PsbF, PsbH, PsbI, PsbJ, PsbK, PsbL, PsbM, PsbT, PsbX, PsbY, PsbZ, Psb30/Ycf12, peripheral proteins PsbO, CyanoQ (PsbQ), PsbU, PsbV and a large number of cofactors. It forms dimeric complexes.

The protein localises to the cellular thylakoid membrane. Its function is as follows. One of the components of the core complex of photosystem II (PSII). PSII is a light-driven water:plastoquinone oxidoreductase that uses light energy to abstract electrons from H(2)O, generating O(2) and a proton gradient subsequently used for ATP formation. It consists of a core antenna complex that captures photons, and an electron transfer chain that converts photonic excitation into a charge separation. The protein is Photosystem II reaction center protein J of Synechococcus sp. (strain ATCC 27144 / PCC 6301 / SAUG 1402/1) (Anacystis nidulans).